A 1740-amino-acid polypeptide reads, in one-letter code: SH3 and multiple ankyrin repeat domains protein 3 (1740 aa).

The interval M1–Q75 is intramolecular interaction with the ANK repeats. Position 122 is a phosphotyrosine (Y122). 6 ANK repeats span residues S148–R181, D182–S214, R215–T245, N249–A278, S282–V311, and N315–P345. The tract at residues K354–L466 is disordered. Residues S373, S375, S387, and S394 each carry the phosphoserine modification. Over residues L404–E415 the composition is skewed to basic and acidic residues. Positions A444–R460 are enriched in pro residues. The SH3 domain maps to V470–M529. Phosphoserine is present on S482. The residue at position 555 (Y555) is a Phosphotyrosine. A PDZ domain is found at V570 to T664. Residues T664–T687 form a disordered region. A required for interaction with ABI1 region spans residues P677–P684. Phosphoserine occurs at positions 694, 781, 790, and 801. Disordered regions lie at residues R759–F855, A868–R1053, A1115–S1199, L1211–R1463, and G1476–G1518. Residues I812–G845 show a composition bias toward pro residues. A phosphoserine mark is found at S891 and S898. At T913 the chain carries Phosphothreonine. Y931 is modified (phosphotyrosine). R966 is modified (asymmetric dimethylarginine). Over residues V1017 to R1027 the composition is skewed to basic and acidic residues. Positions S1123–P1132 are enriched in polar residues. At T1131 the chain carries Phosphothreonine. S1135, S1160, S1164, and S1167 each carry phosphoserine. The segment covering A1175–S1195 has biased composition (basic and acidic residues). A Phosphothreonine modification is found at T1235. Pro residues-rich tracts occupy residues M1252–S1262 and T1322–V1334. Phosphoserine is present on S1254. A compositionally biased stretch (low complexity) spans P1335 to S1344. Residues A1361–L1371 are compositionally biased toward basic and acidic residues. Positions E1372–L1393 are enriched in low complexity. An SH3-binding motif is present at residues P1411–P1417. S1421 carries the post-translational modification Phosphoserine. The stretch at I1495 to E1515 forms a coiled coil. Residues S1496–N1506 show a composition bias toward polar residues. Phosphoserine is present on residues S1511, S1522, S1530, and S1549. Disordered regions lie at residues I1556 to L1594 and V1637 to P1673. Residues V1637–P1647 are compositionally biased toward low complexity. Phosphoserine occurs at positions 1644, 1646, and 1648. Pro residues predominate over residues S1648 to G1658. The segment covering S1659–P1668 has biased composition (low complexity). An SAM domain is found at W1677–S1740.

This sequence belongs to the SHANK family. In terms of assembly, may homomultimerize via its SAM domain. Interacts with BAIAP2, DBNL and SLC17A7/VGLUT1. Interacts with DLGAP1/GKAP, GRM1/MGLUR1, GRM5/MGLUR5 and LZTS3 C-termini via its PDZ domain. Interacts with ABI1, HOMER1, HOMER2, HOMER3 and CTTN/cortactin SH3 domain. Is part of a complex with DLG4/PSD-95 and DLGAP1/GKAP. Interacts (via PDZ domain) with the GRIA1 subunit of the AMPA receptor (via PDZ-binding motif). Interacts with WASF1 and CYFIP2; the interactions mediate the association of SHANK3 with the WAVE1 complex. Interacts with ARPC2; the interaction probably mediates the association of SHANK3 with the Arp2/3 complex. Interacts (via ANK repeats) with SHARPIN and SPTAN1. Interacts (via PDZ domain) with ARHGAP44 (probably via PDZ-binding motif); the interaction takes place in dendritic spines and promotes GRIA1 exocytosis. Interacts with CAMK2A. Interacts with DIP2A. Interacts with ADGRL3. Widely expressed in brain (at protein level).

It localises to the cytoplasm. The protein localises to the postsynaptic density. Its subcellular location is the cell projection. It is found in the dendritic spine. Its function is as follows. Major scaffold postsynaptic density protein which interacts with multiple proteins and complexes to orchestrate the dendritic spine and synapse formation, maturation and maintenance. Interconnects receptors of the postsynaptic membrane including NMDA-type and metabotropic glutamate receptors via complexes with GKAP/PSD-95 and HOMER, respectively, and the actin-based cytoskeleton. Plays a role in the structural and functional organization of the dendritic spine and synaptic junction through the interaction with Arp2/3 and WAVE1 complex as well as the promotion of the F-actin clusters. By way of this control of actin dynamics, participates in the regulation of developing neurons growth cone motility and the NMDA receptor-signaling. Also modulates GRIA1 exocytosis and GRM5/MGLUR5 expression and signaling to control the AMPA and metabotropic glutamate receptor-mediated synaptic transmission and plasticity. May be required at an early stage of synapse formation and be inhibited by IGF1 to promote synapse maturation. The chain is SH3 and multiple ankyrin repeat domains protein 3 (Shank3) from Rattus norvegicus (Rat).